Consider the following 561-residue polypeptide: Chaperonin GroEL 1 (561 aa).

Residues 29-32 (TMGP), 86-90 (DGTTT), glycine 413, and aspartate 495 contribute to the ATP site.

This sequence belongs to the chaperonin (HSP60) family. In terms of assembly, forms a cylinder of 14 subunits composed of two heptameric rings stacked back-to-back. Interacts with the co-chaperonin GroES.

The protein localises to the cytoplasm. It catalyses the reaction ATP + H2O + a folded polypeptide = ADP + phosphate + an unfolded polypeptide.. Its function is as follows. Together with its co-chaperonin GroES, plays an essential role in assisting protein folding. The GroEL-GroES system forms a nano-cage that allows encapsulation of the non-native substrate proteins and provides a physical environment optimized to promote and accelerate protein folding. The protein is Chaperonin GroEL 1 of Trichodesmium erythraeum (strain IMS101).